The following is a 341-amino-acid chain: MENPPYHVSISKSEEIKYRQKCKDLKARIQEIQKGNQELLSKYEVIRRAVKRGRLERAILMEQLELQSEAKSREFGQRSEPSPPPPPEGIKIKISTKGAGNPSAKKLKISTEETSDTNVALNNTSEISHKSSNNSQPKDASVNDTDADFEQQNQVVQSKDEKITNTDPIPSPIITNLKTESSKSSGAKKATSNAKITDTMLFNHFSSIQKPKLKAEGSTLKGQALKKTLEDTWNNLTEEEKKPYHEGLLAAREKAREARRRRSAQNSAKLEKEKAKEKQKDKDQEQDTVSDKNQIDEIEKGQKEVDEEPVSEPTTSPILPPKNQEPIRMGGFTVVNRSSNA.

Residues 68-77 are compositionally biased toward basic and acidic residues; sequence SEAKSREFGQ. Disordered regions lie at residues 68–195 and 236–341; these read SEAK…SNAK and LTEE…SSNA. Composition is skewed to polar residues over residues 116-157 and 165-177; these read DTNV…QVVQ and NTDP…ITNL. The span at 178–195 shows a compositional bias: low complexity; that stretch reads KTESSKSSGAKKATSNAK. The segment at residues 195–263 is a DNA-binding region (HMG box); that stretch reads KITDTMLFNH…KAREARRRRS (69 aa). Basic and acidic residues-rich tracts occupy residues 238-256 and 269-304; these read EEEK…EKAR and KLEK…GQKE. Phosphothreonine is present on residues Thr-314 and Thr-315. At Ser-316 the chain carries Phosphoserine.

Its subcellular location is the nucleus. This is HMG box-containing protein C10F6.08c from Schizosaccharomyces pombe (strain 972 / ATCC 24843) (Fission yeast).